The chain runs to 24 residues: Coenzyme PQQ synthesis protein A (24 aa).

Residues 16 to 20 constitute a cross-link (pyrroloquinoline quinone (Glu-Tyr)); the sequence is EITMY.

Belongs to the PqqA family.

Its pathway is cofactor biosynthesis; pyrroloquinoline quinone biosynthesis. Its function is as follows. Required for coenzyme pyrroloquinoline quinone (PQQ) biosynthesis. PQQ is probably formed by cross-linking a specific glutamate to a specific tyrosine residue and excising these residues from the peptide. This chain is Coenzyme PQQ synthesis protein A, found in Burkholderia cenocepacia (strain ATCC BAA-245 / DSM 16553 / LMG 16656 / NCTC 13227 / J2315 / CF5610) (Burkholderia cepacia (strain J2315)).